Reading from the N-terminus, the 223-residue chain is Type 3 secretion system stator protein (223 aa).

This sequence belongs to the SctL stator family. As to quaternary structure, the core secretion machinery of the T3SS is composed of approximately 20 different proteins, including cytoplasmic components, a base, an export apparatus and a needle. This subunit is part of the cytosolic complex. Interacts directly with YscN/SctN (T3SS ATPase) and YscQ/SctQ (the major sorting platform component). Forms homodimers.

The protein resides in the cytoplasm. Its function is as follows. Component of the type III secretion system (T3SS), also called injectisome, which is used to inject bacterial effector proteins into eukaryotic host cells. Acts as a regulator of the YscN/SctN ATPase activity. Overexpression of YscL/SctL abolishes type III secretion and down-regulates the expression of secretion apparatus components. This is Type 3 secretion system stator protein from Yersinia enterocolitica.